The sequence spans 300 residues: Acetyl-coenzyme A carboxylase carboxyl transferase subunit beta 2 (300 aa).

The CoA carboxyltransferase N-terminal domain occupies 26-294 (VWIKCPSCRE…ATAHKSEPIV (269 aa)). 4 residues coordinate Zn(2+): cysteine 30, cysteine 33, cysteine 49, and cysteine 51. The C4-type zinc finger occupies 30 to 51 (CPSCRELIYHKQLAERMKVCRC).

It belongs to the AccD/PCCB family. As to quaternary structure, acetyl-CoA carboxylase is a heterohexamer composed of biotin carboxyl carrier protein (AccB), biotin carboxylase (AccC) and two subunits each of ACCase subunit alpha (AccA) and ACCase subunit beta (AccD). Requires Zn(2+) as cofactor.

The protein resides in the cytoplasm. It catalyses the reaction N(6)-carboxybiotinyl-L-lysyl-[protein] + acetyl-CoA = N(6)-biotinyl-L-lysyl-[protein] + malonyl-CoA. It functions in the pathway lipid metabolism; malonyl-CoA biosynthesis; malonyl-CoA from acetyl-CoA: step 1/1. Its function is as follows. Component of the acetyl coenzyme A carboxylase (ACC) complex. Biotin carboxylase (BC) catalyzes the carboxylation of biotin on its carrier protein (BCCP) and then the CO(2) group is transferred by the transcarboxylase to acetyl-CoA to form malonyl-CoA. This is Acetyl-coenzyme A carboxylase carboxyl transferase subunit beta 2 from Roseiflexus sp. (strain RS-1).